A 553-amino-acid chain; its full sequence is Transcription factor IIIB 70 kDa subunit (553 aa).

A TFIIB-type zinc finger spans residues Lys6–Glu39. Positions 10, 13, 31, and 34 each coordinate Zn(2+). Repeat copies occupy residues Ile98 to Lys174 and Phe193 to Lys272. Residues Ile98–Lys272 are interaction with TBP and with the Pol III subunit C34. Positions Lys281–Phe553 are interaction with TBP. The segment at Lys473 to Asp523 is disordered. Residues Thr480–Gly489 are compositionally biased toward low complexity.

The protein belongs to the TFIIB family. TFIIIB comprises the TATA-binding protein (TBP), the B-related factor (BRF) and a 70 kDa polypeptide.

The protein resides in the nucleus. Its function is as follows. General activator of RNA polymerase III transcription. Interacts with TBP. Binds to Pol III subunit C34 and to the TAU135 component of TFIIIC. This chain is Transcription factor IIIB 70 kDa subunit (TDS4), found in Candida albicans (strain SC5314 / ATCC MYA-2876) (Yeast).